Here is a 1162-residue protein sequence, read N- to C-terminus: ATP-dependent helicase/deoxyribonuclease subunit B (1162 aa).

The 275-residue stretch at M1 to N275 folds into the UvrD-like helicase ATP-binding domain. G8–S15 is a binding site for ATP. In terms of domain architecture, UvrD-like helicase C-terminal spans K269 to V583. 4 residues coordinate [4Fe-4S] cluster: C784, C1117, C1120, and C1126.

This sequence belongs to the helicase family. AddB/RexB type 1 subfamily. As to quaternary structure, heterodimer of AddA and AddB. Requires Mg(2+) as cofactor. The cofactor is [4Fe-4S] cluster.

Its function is as follows. The heterodimer acts as both an ATP-dependent DNA helicase and an ATP-dependent, dual-direction single-stranded exonuclease. Recognizes the chi site generating a DNA molecule suitable for the initiation of homologous recombination. The AddB subunit has 5' -&gt; 3' nuclease activity but not helicase activity. The protein is ATP-dependent helicase/deoxyribonuclease subunit B of Staphylococcus haemolyticus (strain JCSC1435).